The following is a 149-amino-acid chain: Large ribosomal subunit protein uL13 (149 aa).

This sequence belongs to the universal ribosomal protein uL13 family. In terms of assembly, part of the 50S ribosomal subunit.

This protein is one of the early assembly proteins of the 50S ribosomal subunit, although it is not seen to bind rRNA by itself. It is important during the early stages of 50S assembly. The protein is Large ribosomal subunit protein uL13 of Borrelia recurrentis (strain A1).